We begin with the raw amino-acid sequence, 122 residues long: Large ribosomal subunit protein uL14c (122 aa).

It belongs to the universal ribosomal protein uL14 family. As to quaternary structure, part of the 50S ribosomal subunit.

The protein resides in the plastid. Its subcellular location is the chloroplast. Its function is as follows. Binds to 23S rRNA. This chain is Large ribosomal subunit protein uL14c, found in Piper cenocladum (Ant piper).